A 358-amino-acid polypeptide reads, in one-letter code: Protein-glutamate methylesterase/protein-glutamine glutaminase 2 (358 aa).

Positions 7–124 (SVLLVDDSAV…KNFLIESAAE (118 aa)) constitute a Response regulatory domain. 4-aspartylphosphate is present on Asp-58. A CheB-type methylesterase domain is found at 170-358 (AQTTERIVAI…QEIHQAILHR (189 aa)). Active-site residues include Ser-182, His-208, and Asp-304.

The protein belongs to the CheB family. In terms of processing, phosphorylated by CheA. Phosphorylation of the N-terminal regulatory domain activates the methylesterase activity.

Its subcellular location is the cytoplasm. It carries out the reaction [protein]-L-glutamate 5-O-methyl ester + H2O = L-glutamyl-[protein] + methanol + H(+). It catalyses the reaction L-glutaminyl-[protein] + H2O = L-glutamyl-[protein] + NH4(+). In terms of biological role, involved in chemotaxis. Part of a chemotaxis signal transduction system that modulates chemotaxis in response to various stimuli. Catalyzes the demethylation of specific methylglutamate residues introduced into the chemoreceptors (methyl-accepting chemotaxis proteins or MCP) by CheR. Also mediates the irreversible deamidation of specific glutamine residues to glutamic acid. The chain is Protein-glutamate methylesterase/protein-glutamine glutaminase 2 from Pseudomonas syringae pv. tomato (strain ATCC BAA-871 / DC3000).